The sequence spans 309 residues: Syndecan-1 (309 aa).

Residues 1-22 (MRRAALWLWLCALALRLQPVLP) form the signal peptide. The Extracellular segment spans residues 23–253 (QIVTVNVPPE…GLLDRKEVLG (231 aa)). Disordered stretches follow at residues 28–57 (NVPP…DITL) and 145–185 (TTAQ…GGTS). Residues 32–42 (EDQDGSGDDSD) show a composition bias toward acidic residues. The O-linked (Xyl...) (chondroitin sulfate) serine glycan is linked to Ser-37. An N-linked (GlcNAc...) asparagine glycan is attached at Asn-43. O-linked (Xyl...) (heparan sulfate) serine glycans are attached at residues Ser-45 and Ser-47. A compositionally biased stretch (low complexity) spans 173 to 183 (GQPDQQPPSGG). Ser-205 and Ser-215 each carry an O-linked (Xyl...) (chondroitin sulfate) serine glycan. A helical transmembrane segment spans residues 254–274 (GVIAGGLVGLIFAVCLVGFML). At 275-309 (YRMKKKDEGSYSLEEPKQANGGAYQKPTKQEEFYA) the chain is on the cytoplasmic side. Positions 283–309 (GSYSLEEPKQANGGAYQKPTKQEEFYA) are disordered. A Phosphoserine modification is found at Ser-284.

It belongs to the syndecan proteoglycan family. Interacts with CDCP1. Interacts (via C-terminus) with TIAM1 (via PDZ domain). Interacts with MDK. Post-translationally, shedding is enhanced by a number of factors such as heparanase, thrombin or EGF. Also by stress and wound healing. PMA-mediated shedding is inhibited by TIMP3.

The protein localises to the membrane. It localises to the secreted. The protein resides in the extracellular exosome. In terms of biological role, cell surface proteoglycan that contains both heparan sulfate and chondroitin sulfate and that links the cytoskeleton to the interstitial matrix. Regulates exosome biogenesis in concert with SDCBP and PDCD6IP. Able to induce its own expression in dental mesenchymal cells and also in the neighboring dental epithelial cells via an MSX1-mediated pathway. In Mesocricetus auratus (Golden hamster), this protein is Syndecan-1.